The sequence spans 913 residues: Eukaryotic translation initiation factor 3 subunit C (913 aa).

The segment at 1-44 is disordered; that stretch reads MSRFFTTGSDSESESSLSGEELVTKPVGGNYGKQPLLLSEDEED. The segment covering 8 to 21 has biased composition (low complexity); sequence GSDSESESSLSGEE. Phosphoserine occurs at positions 9, 11, 13, 15, 16, 18, and 39. An N6-acetyllysine modification is found at Lys99. 2 disordered regions span residues 157 to 301 and 522 to 542; these read TSYK…GGEW and QLTP…NEGE. Residues Ser166, Ser178, Ser181, and Ser182 each carry the phosphoserine modification. Residues 166–190 show a composition bias toward acidic residues; that stretch reads SADEDAEKNEEDSEGSSDEDEDEDG. Residues 199–216 are compositionally biased toward basic and acidic residues; the sequence is KKSEAPSGESRKFLKKMD. Over residues 217–232 the composition is skewed to acidic residues; that stretch reads DEDEDSEDSEDDEDWD. The span at 261-278 shows a compositional bias: basic and acidic residues; that stretch reads PTTDEDKKAAEKKREDKA. Residues 522 to 531 are compositionally biased toward polar residues; sequence QLTPPEGSSK. Phosphothreonine is present on Thr524. Lys643 carries the N6-acetyllysine modification. A PCI domain is found at 673 to 849; the sequence is FHLHINLELL…QTVVMHRTEP (177 aa). The tract at residues 885 to 913 is disordered; sequence FRDQKDGYRKNEGYMRRGGYRQQQSQTAY. The span at 886-899 shows a compositional bias: basic and acidic residues; sequence RDQKDGYRKNEGYM. Ser909 is modified (phosphoserine).

In terms of assembly, component of the eukaryotic translation initiation factor 3 (eIF-3) complex, which is composed of 13 subunits: EIF3A, EIF3B, EIF3C, EIF3D, EIF3E, EIF3F, EIF3G, EIF3H, EIF3I, EIF3J, EIF3K, EIF3L and EIF3M. The eIF-3 complex appears to include 3 stable modules: module A is composed of EIF3A, EIF3B, EIF3G and EIF3I; module B is composed of EIF3F, EIF3H, and EIF3M; and module C is composed of EIF3C, EIF3D, EIF3E, EIF3K and EIF3L. EIF3C of module C binds EIF3B of module A and EIF3H of module B, thereby linking the three modules. EIF3J is a labile subunit that binds to the eIF-3 complex via EIF3B. The eIF-3 complex interacts with RPS6KB1 under conditions of nutrient depletion. Mitogenic stimulation leads to binding and activation of a complex composed of MTOR and RPTOR, leading to phosphorylation and release of RPS6KB1 and binding of EIF4B to eIF-3. Identified in a HCV IRES-mediated translation complex, at least composed of EIF3C, IGF2BP1, RPS3 and HCV RNA-replicon. Interacts with ALKBH4, IFIT1 and IFIT2. Interacts with BZW2/5MP1. Post-translationally, phosphorylated. Phosphorylation is enhanced upon serum stimulation.

Its subcellular location is the cytoplasm. In terms of biological role, component of the eukaryotic translation initiation factor 3 (eIF-3) complex, which is required for several steps in the initiation of protein synthesis. The eIF-3 complex associates with the 40S ribosome and facilitates the recruitment of eIF-1, eIF-1A, eIF-2:GTP:methionyl-tRNAi and eIF-5 to form the 43S pre-initiation complex (43S PIC). The eIF-3 complex stimulates mRNA recruitment to the 43S PIC and scanning of the mRNA for AUG recognition. The eIF-3 complex is also required for disassembly and recycling of post-termination ribosomal complexes and subsequently prevents premature joining of the 40S and 60S ribosomal subunits prior to initiation. The eIF-3 complex specifically targets and initiates translation of a subset of mRNAs involved in cell proliferation, including cell cycling, differentiation and apoptosis, and uses different modes of RNA stem-loop binding to exert either translational activation or repression. This chain is Eukaryotic translation initiation factor 3 subunit C, found in Homo sapiens (Human).